Reading from the N-terminus, the 298-residue chain is Replication protein A 32 kDa subunit B (298 aa).

A DNA-binding region (OB) is located at residues 89 to 163 (VRLVGRMLNK…QVVAYSVRRI (75 aa)).

The protein belongs to the replication factor A protein 2 family. Heterotrimer of RPA1, RPA2 and RPA3 (canonical replication protein A complex). Interacts with RPA1A and RPA3. In terms of processing, phosphorylated in a cell-cycle-dependent manner (from the S phase until mitosis). In response to DNA damage, recruited to DNA-repair nuclear foci, as a hypophosphorylated form.

Its subcellular location is the nucleus. Functionally, component of the replication protein A complex (RPA) required for DNA recombination, repair and replication. The activity of RPA is mediated by single-stranded DNA binding and protein interactions. This Oryza sativa subsp. japonica (Rice) protein is Replication protein A 32 kDa subunit B (RPA2B).